The sequence spans 186 residues: Elongation factor P (186 aa).

Belongs to the elongation factor P family.

Its subcellular location is the cytoplasm. It functions in the pathway protein biosynthesis; polypeptide chain elongation. Its function is as follows. Involved in peptide bond synthesis. Stimulates efficient translation and peptide-bond synthesis on native or reconstituted 70S ribosomes in vitro. Probably functions indirectly by altering the affinity of the ribosome for aminoacyl-tRNA, thus increasing their reactivity as acceptors for peptidyl transferase. The sequence is that of Elongation factor P from Synechococcus sp. (strain CC9902).